The chain runs to 97 residues: Aspartyl/glutamyl-tRNA(Asn/Gln) amidotransferase subunit C (97 aa).

It belongs to the GatC family. In terms of assembly, heterotrimer of A, B and C subunits.

The catalysed reaction is L-glutamyl-tRNA(Gln) + L-glutamine + ATP + H2O = L-glutaminyl-tRNA(Gln) + L-glutamate + ADP + phosphate + H(+). It carries out the reaction L-aspartyl-tRNA(Asn) + L-glutamine + ATP + H2O = L-asparaginyl-tRNA(Asn) + L-glutamate + ADP + phosphate + 2 H(+). Functionally, allows the formation of correctly charged Asn-tRNA(Asn) or Gln-tRNA(Gln) through the transamidation of misacylated Asp-tRNA(Asn) or Glu-tRNA(Gln) in organisms which lack either or both of asparaginyl-tRNA or glutaminyl-tRNA synthetases. The reaction takes place in the presence of glutamine and ATP through an activated phospho-Asp-tRNA(Asn) or phospho-Glu-tRNA(Gln). This chain is Aspartyl/glutamyl-tRNA(Asn/Gln) amidotransferase subunit C, found in Prochlorococcus marinus subsp. pastoris (strain CCMP1986 / NIES-2087 / MED4).